We begin with the raw amino-acid sequence, 1071 residues long: MPKRTDLKSILIIGAGPIVIGQACEFDYSGAQACKALREEGYKVILVNSNPATIMTDPEMADVTYIEPIMWQTVEKIIAKERPDAILPTMGGQTXLNCALDLAGNGVLAKYDVELIGATEDAIDKAEDPGRFKEAMEKIGLSCPKSLFCHTMNEALAAQEQVGFPTLIRPSFTMGGSGGGIAYNKDEFLAICERGFDASPTHELLIEQSVLGWKEYEMEVVRDKADNCIIICSIENFDPMGVHTGDSITVAPAETLTDKEYQIMRNASLAVLREIGVDTGGSNVQFAVNPEKGEMIVIEMNPRVSRSSALASKATGFPIAKVAANWAVGFTLDELRNDITGRRTPASFEPSIDYVVTKMARFAFEKFPAADDRLTTQMKSVGEVMAMGRTIQESFQKALRGLETGLCGFNPARRRQTEIRRELANPGPERMLFVGKAFRAAFTPEEIHEISAIDPWFLAQIEDLMKEEKSVSDGQLQDLDYAALHRLKRKGFSDKRLAQLLNVSEKEVRETRTPVKLDPVYKPVDTSAAEFATETAYLYSTYEEECESRPSDRKKVMILGAGPNPIGQGIEFDYCSVHAALPLRESGFETIMVNCNPETVSTDFDTSDRLYFEPLTLEDVLEIVRTENPWGVIVHYGGQTPLKLANALVENGVNIIGTSADSIDAAEDRERFQKVLNDLGLRQPPNRIAHNEEEALVKAEEIGYPLVVRPSYVLGGPAMQIVHSAEALQKYMREPVQVSEDSPVLLDFFLNNAIEVDVDCVSDGKDVVIGGIMQHVEQAGIHSGDSGCSLPPYSLSEEIQDEIRRQTKAMAYALGLVGLMNVQFAVQDAVVFVLEVNPRATRTVPFVSKATGQRLAKVGARCMAGISLKEQGVEKEVVPDFYAVKEAVFPFIKFPGVDTILNPEMRSTGEVMGVGRSFGEAYYKAQLGAGERLNPTGKIFLSVREEDKERVIKTAKNFQALGYGICPTRGTAQYLTEHGLIVQAINKVPEGRPHIGDALKNGEIALVVNTVSSDPQSVSDSHIIRQSALQQRVPQYTTTAGGEAMSEGAKSRDYLGVYSVQELHGRLKNRN.

Residues 1–403 form a carboxyphosphate synthetic domain region; that stretch reads MPKRTDLKSI…SFQKALRGLE (403 aa). Positions 133 to 328 constitute an ATP-grasp 1 domain; it reads KEAMEKIGLS…IAKVAANWAV (196 aa). ATP-binding residues include Arg-169, Gly-175, Gly-176, Gln-208, Val-210, Glu-215, Gly-241, Val-242, His-243, Gln-285, and Glu-299. Mg(2+)-binding residues include Gln-285, Glu-299, and Asn-301. Residues Gln-285, Glu-299, and Asn-301 each contribute to the Mn(2+) site. The oligomerization domain stretch occupies residues 404-548; that stretch reads TGLCGFNPAR…YSTYEEECES (145 aa). Residues 549 to 930 are carbamoyl phosphate synthetic domain; that stretch reads RPSDRKKVMI…AYYKAQLGAG (382 aa). One can recognise an ATP-grasp 2 domain in the interval 673-864; sequence QKVLNDLGLR…LAKVGARCMA (192 aa). Residues Arg-709, Phe-748, Leu-750, Glu-755, Gly-780, Ile-781, His-782, Ser-783, Gln-823, and Glu-835 each coordinate ATP. 3 residues coordinate Mg(2+): Gln-823, Glu-835, and Asn-837. Mn(2+) contacts are provided by Gln-823, Glu-835, and Asn-837. The MGS-like domain maps to 931 to 1071; that stretch reads ERLNPTGKIF…ELHGRLKNRN (141 aa). The segment at 931–1071 is allosteric domain; the sequence is ERLNPTGKIF…ELHGRLKNRN (141 aa).

It belongs to the CarB family. In terms of assembly, composed of two chains; the small (or glutamine) chain promotes the hydrolysis of glutamine to ammonia, which is used by the large (or ammonia) chain to synthesize carbamoyl phosphate. Tetramer of heterodimers (alpha,beta)4. Requires Mg(2+) as cofactor. Mn(2+) serves as cofactor.

It catalyses the reaction hydrogencarbonate + L-glutamine + 2 ATP + H2O = carbamoyl phosphate + L-glutamate + 2 ADP + phosphate + 2 H(+). The catalysed reaction is hydrogencarbonate + NH4(+) + 2 ATP = carbamoyl phosphate + 2 ADP + phosphate + 2 H(+). It functions in the pathway amino-acid biosynthesis; L-arginine biosynthesis; carbamoyl phosphate from bicarbonate: step 1/1. The protein operates within pyrimidine metabolism; UMP biosynthesis via de novo pathway; (S)-dihydroorotate from bicarbonate: step 1/3. Its function is as follows. Large subunit of the glutamine-dependent carbamoyl phosphate synthetase (CPSase). CPSase catalyzes the formation of carbamoyl phosphate from the ammonia moiety of glutamine, carbonate, and phosphate donated by ATP, constituting the first step of 2 biosynthetic pathways, one leading to arginine and/or urea and the other to pyrimidine nucleotides. The large subunit (synthetase) binds the substrates ammonia (free or transferred from glutamine from the small subunit), hydrogencarbonate and ATP and carries out an ATP-coupled ligase reaction, activating hydrogencarbonate by forming carboxy phosphate which reacts with ammonia to form carbamoyl phosphate. The polypeptide is Carbamoyl phosphate synthase large chain (Neisseria gonorrhoeae).